A 246-amino-acid chain; its full sequence is Bis(5'-nucleosyl)-tetraphosphatase PrpE [asymmetrical] (246 aa).

Belongs to the PrpE family. The cofactor is Ni(2+).

The catalysed reaction is P(1),P(4)-bis(5'-guanosyl) tetraphosphate + H2O = GMP + GTP + 2 H(+). In terms of biological role, asymmetrically hydrolyzes Ap4p to yield AMP and ATP. The polypeptide is Bis(5'-nucleosyl)-tetraphosphatase PrpE [asymmetrical] (Bacillus cereus (strain ZK / E33L)).